A 419-amino-acid chain; its full sequence is Pyrrolysine--tRNA ligase (419 aa).

Residues 100-157 (APKVKKAMPKSVSRAPKPLENSVSAKASTNTSRSVPSPAKSTPNSSVPASAPAPSLTR) form a disordered region. Polar residues predominate over residues 120 to 141 (NSVSAKASTNTSRSVPSPAKST). Residues 142-154 (PNSSVPASAPAPS) are compositionally biased toward low complexity.

The protein belongs to the class-II aminoacyl-tRNA synthetase family.

Its subcellular location is the cytoplasm. The catalysed reaction is tRNA(Pyl) + L-pyrrolysine + ATP = L-pyrrolysyl-tRNA(Pyl) + AMP + diphosphate. Its function is as follows. Catalyzes the attachment of pyrrolysine to tRNA(Pyl). Pyrrolysine is a lysine derivative encoded by the termination codon UAG. The sequence is that of Pyrrolysine--tRNA ligase (pylS) from Methanosarcina barkeri.